We begin with the raw amino-acid sequence, 161 residues long: MKIRIGHGFDVHKFGEVRPLILCGVEVPYETGLVAHSDGDVVLHAVSDAILGAMALGDIGKHFPDTDTAYKGADSRVLLRHCYDLAKQRGFELGNVDVTIIAQAPKIAPHIEAMRQVLATDLMAELDDINVKATTTEKLGFTGRKEGIAVEAVVLMSRKQD.

A divalent metal cation is bound by residues Asp-10 and His-12. 4-CDP-2-C-methyl-D-erythritol 2-phosphate is bound by residues 10–12 and 36–37; these read DVH and HS. His-44 contacts a divalent metal cation. 4-CDP-2-C-methyl-D-erythritol 2-phosphate-binding positions include 58–60, 63–67, 134–137, Phe-141, and Arg-144; these read DIG, FPDTD, and TTTE.

The protein belongs to the IspF family. In terms of assembly, homotrimer. It depends on a divalent metal cation as a cofactor.

The catalysed reaction is 4-CDP-2-C-methyl-D-erythritol 2-phosphate = 2-C-methyl-D-erythritol 2,4-cyclic diphosphate + CMP. It participates in isoprenoid biosynthesis; isopentenyl diphosphate biosynthesis via DXP pathway; isopentenyl diphosphate from 1-deoxy-D-xylulose 5-phosphate: step 4/6. Functionally, involved in the biosynthesis of isopentenyl diphosphate (IPP) and dimethylallyl diphosphate (DMAPP), two major building blocks of isoprenoid compounds. Catalyzes the conversion of 4-diphosphocytidyl-2-C-methyl-D-erythritol 2-phosphate (CDP-ME2P) to 2-C-methyl-D-erythritol 2,4-cyclodiphosphate (ME-CPP) with a corresponding release of cytidine 5-monophosphate (CMP). The chain is 2-C-methyl-D-erythritol 2,4-cyclodiphosphate synthase from Shewanella putrefaciens (strain CN-32 / ATCC BAA-453).